The primary structure comprises 258 residues: Probable phthiotriol/phenolphthiotriol dimycocerosates methyltransferase 2 (258 aa).

The protein belongs to the methyltransferase superfamily. Phthiotriol/phenolphthiotriol dimycocerosates methyltransferase family.

Catalyzes the methylation of the lipid moiety of the intermediate compounds phthiotriol and glycosylated phenolphthiotriol dimycoserosates to form phthiocerol dimycocerosates (DIM A) and glycosylated phenolphthiocerol dimycocerosates (PGL). In Mycobacterium ulcerans (strain Agy99), this protein is Probable phthiotriol/phenolphthiotriol dimycocerosates methyltransferase 2.